Reading from the N-terminus, the 871-residue chain is Transient receptor potential cation channel subfamily V member 4 (871 aa).

2 disordered regions span residues 1 to 68 (MADP…PNLR) and 110 to 143 (YGTY…PQPP). Residues 1 to 469 (MADPGDGPRA…RDKWRKFGAV (469 aa)) lie on the Cytoplasmic side of the membrane. Tyr110 is subject to Phosphotyrosine. The span at 116–129 (HPSDNKRWRRKVVE) shows a compositional bias: basic and acidic residues. ATP is bound by residues Lys192, Lys197, Asn201, 236-239 (YRGQ), and Arg248. ANK repeat units follow at residues 237-266 (RGQT…DVHA) and 284-313 (FGEL…KKAD). 249 to 251 (RCK) contributes to the a 1,2-diacyl-sn-glycero-3-phospho-(1D-myo-inositol-4,5-bisphosphate) binding site. A Phosphotyrosine modification is found at Tyr253. A 1,2-diacyl-sn-glycero-3-phospho-(1D-myo-inositol-4,5-bisphosphate)-binding positions include 296-299 (NQPH) and Lys344. An ANK 3 repeat occupies 369-398 (DGLSPLMMAAKTGKIGVFQHIIRREVTDED). A helical transmembrane segment spans residues 470–490 (SFYINVVSYLCAMVIFTLTAY). Topologically, residues 491–507 (YQPLEGTPPYPYRTTVD) are extracellular. The chain crosses the membrane as a helical span at residues 508–534 (YLRLAGEVITLLTGVLFFFTSIKDLFM). At 535–547 (KKCPGVNSLFVDG) the chain is on the cytoplasmic side. The chain crosses the membrane as a helical span at residues 548–568 (SFQLLYFIYSVLVVVSAALYL). Topologically, residues 569 to 572 (AGIE) are extracellular. A helical transmembrane segment spans residues 573 to 593 (AYLAVMVFALVLGWMNALYFT). Residues 594-608 (RGLKLTGTYSIMIQK) are Cytoplasmic-facing. Residues 609–636 (ILFKDLFRFLLVYLLFMIGYASALVTLL) form a helical membrane-spanning segment. Over 637–665 (NPCTNMKVCNEDQSNCTVPSYPACRDSET) the chain is Extracellular. An intramembrane region (pore-forming) is located at residues 666–685 (FSAFLLDLFKLTIGMGDLEM). The Selectivity filter signature appears at 679-682 (GMGD). Asp682 serves as a coordination point for Ca(2+). The Extracellular portion of the chain corresponds to 686-693 (LSSAKYPV). A helical transmembrane segment spans residues 694–722 (VFILLLVTYIILTFVLLLNMLIALMGETV). Over 723–871 (GQVSKESKHI…PKWRAEDAPL (149 aa)) the chain is Cytoplasmic. Tyr805 is subject to Phosphotyrosine. The segment at 812–831 (HTMGRLRRDRWSSVVPRVVE) is interaction with calmodulin and ITPR3. Ser824 is subject to Phosphoserine.

It belongs to the transient receptor (TC 1.A.4) family. TrpV subfamily. TRPV4 sub-subfamily. As to quaternary structure, homotetramer. Interacts with calmodulin. Interacts with MAP7 and Src family Tyr protein kinases LYN, SRC, FYN, HCK, LCK and YES. Interacts with CTNNB1. The TRPV4 and CTNNB1 complex can interact with CDH1. Part of a complex containing MLC1, AQP4, HEPACAM and ATP1B1. Interacts with PACSIN1, PACSIN2 and PACSIN3 (via SH3 domain). Interacts with ITPR3. Interacts with AQP5; the interaction is probably indirect and regulates TRPV4 activation by hypotonicity. Interacts with ANO1. Interacts (via C-terminus) with PKD2 (via C-terminus). Interacts with DDX3X; this interaction is decreased when the channel is activated. N-glycosylated. Expressed lung, spleen, kidney, testis, fat, and at very low levels in trigeminal ganglia.

The protein localises to the cell membrane. The protein resides in the apical cell membrane. Its subcellular location is the cell junction. It is found in the adherens junction. It localises to the cell projection. The protein localises to the cilium. The enzyme catalyses Ca(2+)(in) = Ca(2+)(out). Non-selective calcium permeant cation channel involved in osmotic sensitivity and mechanosensitivity. Activation by exposure to hypotonicity within the physiological range exhibits an outward rectification. Also activated by heat, low pH, citrate and phorbol esters. Increase of intracellular Ca(2+) potentiates currents. Channel activity seems to be regulated by a calmodulin-dependent mechanism with a negative feedback mechanism. Acts as a regulator of intracellular Ca(2+) in synoviocytes. Plays an obligatory role as a molecular component in the nonselective cation channel activation induced by 4-alpha-phorbol 12,13-didecanoate and hypotonic stimulation in synoviocytes and also regulates production of IL-8. Together with PKD2, forms mechano- and thermosensitive channels in cilium. Promotes cell-cell junction formation in skin keratinocytes and plays an important role in the formation and/or maintenance of functional intercellular barriers. Negatively regulates expression of PPARGC1A, UCP1, oxidative metabolism and respiration in adipocytes. Regulates expression of chemokines and cytokines related to pro-inflammatory pathway in adipocytes. Together with AQP5, controls regulatory volume decrease in salivary epithelial cells. Required for normal development and maintenance of bone and cartilage. In its inactive state, may sequester DDX3X at the plasma membrane. When activated, the interaction between both proteins is affected and DDX3X relocalizes to the nucleus. In neurons of the central nervous system, could play a role in triggering voluntary water intake in response to increased sodium concentration in body fluid. The chain is Transient receptor potential cation channel subfamily V member 4 (Trpv4) from Rattus norvegicus (Rat).